The chain runs to 132 residues: Chemokine-like protein TAFA-5 (132 aa).

A signal peptide spans 1–43 (MAPSPRTSSRQDATALPSMSSTFWAFMILASLLIAYCSQLAAG). N-linked (GlcNAc...) asparagine glycosylation occurs at N113.

The protein belongs to the TAFA family. In terms of tissue distribution, expressed in the subcutaneous, brown, epididymal and perirenal adipose tissue (at protein level).

The protein localises to the secreted. Functionally, acts as a chemokine-like protein by regulating cell proliferation and migration through activation of G protein-coupled receptors (GPCRs), such as S1PR2 and FPR2. Stimulates chemotactic migration of macrophages mediated by the MAPK3/ERK1 and AKT1 pathway. Blocks TNFSF11/RANKL-induced osteoclast formation from macrophages by inhibiting up-regulation of osteoclast fusogenic and differentiation genes. Stimulation of macrophage migration and inhibition of osteoclast formation is mediated through the GPCR FPR2. Acts as an adipokine by negatively regulating vascular smooth muscle cell (VSMC) proliferation and migration in response to platelet-derived growth factor stimulation via GPCR S1PR2 and G protein GNA12/GNA13-transmitted RHOA signaling. Inhibits injury-induced cell proliferation and neointima formation in the femoral arteries. The polypeptide is Chemokine-like protein TAFA-5 (Tafa5) (Mus musculus (Mouse)).